A 438-amino-acid chain; its full sequence is Probable inactive protein kinase 38 (438 aa).

The 264-residue stretch at 77 to 340 folds into the Protein kinase domain; sequence PRFRLALGKG…FTELQPQYFL (264 aa).

Belongs to the protein kinase superfamily. Tyr protein kinase family.

The chain is Probable inactive protein kinase 38 (36) from Equus caballus (Horse).